Reading from the N-terminus, the 344-residue chain is GTPase Obg (344 aa).

The Obg domain occupies 1–159 (MKFLDLAKVY…RTIWLRLKLI (159 aa)). The OBG-type G domain occupies 160–327 (ADVGLLGLPN…VLRALRARID (168 aa)). GTP-binding positions include 166-173 (GLPNAGKS), 191-195 (FTTLH), 212-215 (DIPG), 279-282 (NKID), and 308-310 (SGA). Ser-173 and Thr-193 together coordinate Mg(2+).

This sequence belongs to the TRAFAC class OBG-HflX-like GTPase superfamily. OBG GTPase family. In terms of assembly, monomer. Requires Mg(2+) as cofactor.

Its subcellular location is the cytoplasm. Its function is as follows. An essential GTPase which binds GTP, GDP and possibly (p)ppGpp with moderate affinity, with high nucleotide exchange rates and a fairly low GTP hydrolysis rate. Plays a role in control of the cell cycle, stress response, ribosome biogenesis and in those bacteria that undergo differentiation, in morphogenesis control. This Ruegeria pomeroyi (strain ATCC 700808 / DSM 15171 / DSS-3) (Silicibacter pomeroyi) protein is GTPase Obg.